The chain runs to 452 residues: Pup--protein ligase (452 aa).

Glu-9 lines the Mg(2+) pocket. Arg-53 is an ATP binding site. Position 55 (Tyr-55) interacts with Mg(2+). Asp-57 (proton acceptor) is an active-site residue. Glu-63 contacts Mg(2+). 2 residues coordinate ATP: Thr-66 and Trp-419.

Belongs to the Pup ligase/Pup deamidase family. Pup-conjugating enzyme subfamily.

The catalysed reaction is ATP + [prokaryotic ubiquitin-like protein]-L-glutamate + [protein]-L-lysine = ADP + phosphate + N(6)-([prokaryotic ubiquitin-like protein]-gamma-L-glutamyl)-[protein]-L-lysine.. It functions in the pathway protein degradation; proteasomal Pup-dependent pathway. The protein operates within protein modification; protein pupylation. Functionally, catalyzes the covalent attachment of the prokaryotic ubiquitin-like protein modifier Pup to the proteasomal substrate proteins, thereby targeting them for proteasomal degradation. This tagging system is termed pupylation. The ligation reaction involves the side-chain carboxylate of the C-terminal glutamate of Pup and the side-chain amino group of a substrate lysine. The protein is Pup--protein ligase of Actinosynnema mirum (strain ATCC 29888 / DSM 43827 / JCM 3225 / NBRC 14064 / NCIMB 13271 / NRRL B-12336 / IMRU 3971 / 101).